Reading from the N-terminus, the 189-residue chain is Accessory gene regulator protein B (189 aa).

5 consecutive transmembrane segments (helical) span residues valine 50–isoleucine 70, leucine 83–valine 103, valine 105–alanine 125, lysine 143–proline 163, and tyrosine 164–phenylalanine 184.

The protein belongs to the AgrB family.

The protein localises to the cell membrane. In terms of biological role, essential for the production of a quorum sensing system signal molecule, the autoinducing peptide (AIP). This quorum sensing system is responsible for the regulation of the expression of virulence factor genes. Involved in the proteolytic processing of AgrD, the precursor of AIP. The chain is Accessory gene regulator protein B from Staphylococcus saprophyticus subsp. saprophyticus (strain ATCC 15305 / DSM 20229 / NCIMB 8711 / NCTC 7292 / S-41).